The sequence spans 348 residues: Alpha-2-HS-glycoprotein (348 aa).

The N-terminal stretch at 1 to 18 (MKTLVLLLCFTLLWGCQS) is a signal peptide. In terms of domain architecture, Cystatin fetuin-A-type 1 spans 19 to 133 (APQGTGLGFR…QFSVMHTKCH (115 aa)). Disulfide bonds link Cys-32/Cys-339, Cys-89/Cys-100, Cys-114/Cys-132, Cys-146/Cys-149, Cys-208/Cys-219, and Cys-230/Cys-247. Residue Asn-99 is glycosylated (N-linked (GlcNAc...) asparagine). Phosphoserine is present on residues Ser-134 and Ser-138. The Cystatin fetuin-A-type 2 domain maps to 144–255 (KVCPHCALLT…TCTAFPTQAN (112 aa)). N-linked (GlcNAc...) asparagine glycosylation is found at Asn-156 and Asn-176. Residues Ser-307, Ser-311, Ser-314, and Ser-316 each carry the phosphoserine modification.

The protein belongs to the fetuin family. Phosphorylated by FAM20C in the extracellular medium. As to expression, expressed by the liver and secreted in plasma.

It localises to the secreted. The protein is Alpha-2-HS-glycoprotein (AHSG) of Meriones unguiculatus (Mongolian jird).